The following is a 291-amino-acid chain: MISMLNQQVELKPILKFQITQIYSHSLIQEIKALITRLVLQVWRRPATLMAGIIQPLLWLILFGGLFYNAPINLFTINTSYNCFLSSGIIIFTSFTGALNSGLPLMFDREFGFLNRLLTAPLVSRTSIILSSATFMTCISLIQVVFIVTASLFMGNSPLNSDSTMIFGLMILLVTVGVTMLSLALSFTLPGHIELLAFILVVNLPFLFSSTALAPLYFMPPWLQLIASLNPLSYAIEGTRYLYSSVNWNFTECVIKISWGDICLGQIIILLIALDIMAAYLVSNILKAKLN.

Transmembrane regions (helical) follow at residues 47–67 (ATLM…GGLF), 87–107 (SGII…PLMF), 135–155 (FMTC…LFMG), 165–185 (MIFG…SLAL), 195–215 (LLAF…ALAP), and 262–282 (ICLG…AYLV). In terms of domain architecture, ABC transmembrane type-2 spans 47-289 (ATLMAGIIQP…YLVSNILKAK (243 aa)).

This sequence belongs to the ABC-2 integral membrane protein family.

Its subcellular location is the plastid. It is found in the chloroplast membrane. This chain is Putative transport permease ycf38 (ycf38), found in Pyropia yezoensis (Susabi-nori).